A 374-amino-acid chain; its full sequence is DNA replication and repair protein RecF (374 aa).

Position 30–37 (30–37 (GPNAQGKT)) interacts with ATP.

This sequence belongs to the RecF family.

Its subcellular location is the cytoplasm. Its function is as follows. The RecF protein is involved in DNA metabolism; it is required for DNA replication and normal SOS inducibility. RecF binds preferentially to single-stranded, linear DNA. It also seems to bind ATP. This Lactobacillus johnsonii (strain CNCM I-12250 / La1 / NCC 533) protein is DNA replication and repair protein RecF.